The sequence spans 360 residues: Uptake hydrogenase small subunit (360 aa).

The segment at residues 1 to 43 (MVETFYEVMRRQGISRRSFLKYCSLTATSLGLGPSFLPQIAHA) is a signal peptide (tat-type signal). Residues C60, C63, C158, C192, H230, C233, C258, and C264 each coordinate [4Fe-4S] cluster. Residues C273, C292, and C295 each contribute to the [3Fe-4S] cluster site.

It belongs to the [NiFe]/[NiFeSe] hydrogenase small subunit family. In terms of assembly, heterodimer of a large and a small subunit. It depends on [4Fe-4S] cluster as a cofactor. [3Fe-4S] cluster is required as a cofactor. In terms of processing, predicted to be exported by the Tat system. The position of the signal peptide cleavage has been experimentally proven.

Its subcellular location is the cell membrane. The catalysed reaction is H2 + A = AH2. This enzyme recycles the H(2) produced by nitrogenase to increase the production of ATP and to protect nitrogenase against inhibition or damage by O(2) under carbon- or phosphate-limited conditions. The sequence is that of Uptake hydrogenase small subunit (hoxK) from Cupriavidus necator (strain ATCC 17699 / DSM 428 / KCTC 22496 / NCIMB 10442 / H16 / Stanier 337) (Ralstonia eutropha).